The following is a 267-amino-acid chain: WUSCHEL-related homeobox 8 (267 aa).

A DNA-binding region (homeobox; WUS-type) is located at residues 88–152 (TARQRWTPTP…NRRARSKRKQ (65 aa)). The disordered stretch occupies residues 148 to 195 (SKRKQAALPNNNAESEAEADEESPTDKKPKSDRPLHQNIAMRDHNSER). Residues 171-195 (PTDKKPKSDRPLHQNIAMRDHNSER) are compositionally biased toward basic and acidic residues.

It belongs to the WUS homeobox family.

The protein localises to the nucleus. Functionally, transcription factor which may be involved in developmental processes. The protein is WUSCHEL-related homeobox 8 (WOX8) of Oryza sativa subsp. japonica (Rice).